We begin with the raw amino-acid sequence, 237 residues long: Increased recombination centers protein 6 (237 aa).

This sequence belongs to the IRC6 family.

Its function is as follows. Involved in gross chromosomal rearrangements (GCRs) and telomere healing. This Saccharomyces cerevisiae (strain YJM789) (Baker's yeast) protein is Increased recombination centers protein 6 (IRC6).